Here is a 636-residue protein sequence, read N- to C-terminus: Sodium-dependent nutrient amino acid transporter 1 (636 aa).

Residues Met-1 to Thr-40 form a disordered region. The Cytoplasmic portion of the chain corresponds to Met-1–Glu-50. Residues Pro-7–Thr-40 show a composition bias toward low complexity. A run of 3 helical transmembrane segments spans residues Phe-51–Thr-71, Gly-78–Leu-98, and Thr-131–Val-151. A glycan (N-linked (GlcNAc...) asparagine) is linked at Asn-184. The next 9 membrane-spanning stretches (helical) occupy residues Pro-225–Met-245, Ala-254–Val-274, Ala-303–Ser-323, Ile-337–Leu-357, Leu-397–Leu-417, Val-436–Gly-456, Thr-469–Val-489, Cys-511–Ile-531, and Val-547–Tyr-567.

It belongs to the sodium:neurotransmitter symporter (SNF) (TC 2.A.22) family.

Its subcellular location is the membrane. Its function is as follows. Unusual broad substrate spectrum amino acid:sodium cotransporter that promotes absorption of the D isomers of essential amino acids. Neutral amino acids are the preferred substrates, especially methionine and phenylalanine. The chain is Sodium-dependent nutrient amino acid transporter 1 from Drosophila grimshawi (Hawaiian fruit fly).